A 118-amino-acid polypeptide reads, in one-letter code: uncharacterized protein (118 aa).

The protein to S.pombe tam6.

The protein resides in the mitochondrion. This is an uncharacterized protein from Saccharomyces cerevisiae (strain ATCC 204508 / S288c) (Baker's yeast).